The sequence spans 229 residues: MRRTKIVVPIMLTELTELEKVSVSDYHSADIVEWRADFLSADDIFEMAPKFFEKFKESKILFTLRTVREGGNIQVSEKKYLQILQEILKFDPDYIDVEYFSHGPSFAALKNYREKIVLSYHNFDEVPTDLTSRLIKMHEEGTAFVKVAVMPERECDVLDLLQITRDMTLEYGNHFISMAMGDLGRLSRISGYLTGSCWTFASLENSSAPGQISLKETVEILDLLENELA.

3-dehydroquinate is bound by residues 33 to 35 (EWR) and arginine 65. The active-site Proton donor/acceptor is histidine 121. Catalysis depends on lysine 146, which acts as the Schiff-base intermediate with substrate. 3 residues coordinate 3-dehydroquinate: arginine 188, serine 207, and glutamine 211.

The protein belongs to the type-I 3-dehydroquinase family. In terms of assembly, homodimer.

It carries out the reaction 3-dehydroquinate = 3-dehydroshikimate + H2O. It participates in metabolic intermediate biosynthesis; chorismate biosynthesis; chorismate from D-erythrose 4-phosphate and phosphoenolpyruvate: step 3/7. Functionally, involved in the third step of the chorismate pathway, which leads to the biosynthesis of aromatic amino acids. Catalyzes the cis-dehydration of 3-dehydroquinate (DHQ) and introduces the first double bond of the aromatic ring to yield 3-dehydroshikimate. The chain is 3-dehydroquinate dehydratase from Lactococcus lactis subsp. cremoris (strain MG1363).